The chain runs to 428 residues: Putative UPF0496 protein 5 (428 aa).

Positions 1–14 are enriched in basic residues; that stretch reads MGNRHGIMRPRRLA. Positions 1 to 40 are disordered; it reads MGNRHGIMRPRRLASGRSAAAAEEEGEDGEGEPGSYEAAC. A compositionally biased stretch (acidic residues) spans 22–31; sequence AEEEGEDGEG. 2 helical membrane-spanning segments follow: residues 229 to 249 and 252 to 272; these read IVFL…AAIA and PVAA…GKWM.

Belongs to the UPF0496 family.

Its subcellular location is the membrane. This is Putative UPF0496 protein 5 from Oryza sativa subsp. indica (Rice).